Reading from the N-terminus, the 635-residue chain is 1-deoxy-D-xylulose-5-phosphate synthase (635 aa).

Residues histidine 79 and 120-122 (GHS) contribute to the thiamine diphosphate site. Aspartate 151 is a binding site for Mg(2+). Residues 152–153 (GA), asparagine 182, tyrosine 290, and glutamate 372 contribute to the thiamine diphosphate site. A Mg(2+)-binding site is contributed by asparagine 182.

It belongs to the transketolase family. DXPS subfamily. In terms of assembly, homodimer. Mg(2+) serves as cofactor. It depends on thiamine diphosphate as a cofactor.

It carries out the reaction D-glyceraldehyde 3-phosphate + pyruvate + H(+) = 1-deoxy-D-xylulose 5-phosphate + CO2. It functions in the pathway metabolic intermediate biosynthesis; 1-deoxy-D-xylulose 5-phosphate biosynthesis; 1-deoxy-D-xylulose 5-phosphate from D-glyceraldehyde 3-phosphate and pyruvate: step 1/1. Catalyzes the acyloin condensation reaction between C atoms 2 and 3 of pyruvate and glyceraldehyde 3-phosphate to yield 1-deoxy-D-xylulose-5-phosphate (DXP). The protein is 1-deoxy-D-xylulose-5-phosphate synthase of Stenotrophomonas maltophilia (strain K279a).